The sequence spans 405 residues: Transposase from transposon Tn916 (405 aa).

Residues 79 to 163 (GKKMTLCQLY…SLKASFYIAI (85 aa)) form the Core-binding (CB) domain. A Tyr recombinase domain is found at 186–392 (VPKTVLTEEQ…TFDSAMAEMK (207 aa)). Catalysis depends on residues arginine 225, lysine 264, histidine 343, arginine 346, and histidine 369. Tyrosine 379 acts as the O-(3'-phospho-DNA)-tyrosine intermediate in catalysis.

The protein belongs to the 'phage' integrase family.

The polypeptide is Transposase from transposon Tn916 (Int-Tn) (Enterococcus faecalis (Streptococcus faecalis)).